Here is a 369-residue protein sequence, read N- to C-terminus: Somatostatin receptor type 2 (369 aa).

Residues 1–43 (MEMSSEQLNGSQVWVSSPFDLNGSLGPSNGSNQTEPYYDMTSN) lie on the Extracellular side of the membrane. Asparagine 9, asparagine 22, asparagine 29, and asparagine 32 each carry an N-linked (GlcNAc...) asparagine glycan. A helical membrane pass occupies residues 44–67 (AVLTFIYFVVCVVGLCGNTLVIYV). Over 68 to 78 (ILRYAKMKTIT) the chain is Cytoplasmic. A helical membrane pass occupies residues 79–103 (NIYILNLAIADELFMLGLPFLAMQV). Residues 104–118 (ALVHWPFGKAICRVV) are Extracellular-facing. Cysteine 115 and cysteine 193 are disulfide-bonded. The helical transmembrane segment at 119-138 (MTVDGINQFTSIFCLTVMSI) threads the bilayer. Over 139–161 (DRYLAVVHPIKSAKWRRPRTAKM) the chain is Cytoplasmic. Residues 162-181 (INVAVWCVSLLVILPIMIYA) traverse the membrane as a helical segment. At 182-207 (GLRSNQWGRSSCTINWPGESGAWYTG) the chain is on the extracellular side. A helical transmembrane segment spans residues 208–229 (FIIYAFILGFLVPLTIICLCYL). The Cytoplasmic portion of the chain corresponds to 230-253 (FIIIKVKSSGIRVGSSKRKKSEKK). Residues 254-278 (VTRMVSIVVAVFIFCWLPFYIFNVS) form a helical membrane-spanning segment. The Extracellular segment spans residues 279–288 (SVSVAISPTP). Residues 289–303 (ALKGMFDFVVILTYA) form a helical membrane-spanning segment. Residues 304-369 (NSCANPILYA…LLNGDLQTSI (66 aa)) are Cytoplasmic-facing. Cysteine 328 is lipidated: S-palmitoyl cysteine. A phosphoserine mark is found at serine 341, serine 343, and serine 348. Threonine 353 and threonine 354 each carry phosphothreonine.

This sequence belongs to the G-protein coupled receptor 1 family. Homodimer and heterodimer with SSTR3 and SSTR5. Heterodimerization with SSTR3 inactivates SSTR3 receptor function. Heterodimerization with SSTR5 is enhanced by agonist stimulation of SSTR2 and increases SSTR2 cell growth inhibition activity. Following agonist stimulation, homodimers dissociate into monomers which is required for receptor internalization. Interacts with beta-arrestin; this interaction is necessary for receptor internalization and is destabilized by heterodimerization with SSTR5 which results in increased recycling of SSTR2 to the cell surface. Interacts (via C-terminus) with SHANK1 (via PDZ domain). Phosphorylated on serine and threonine residues in response to agonist stimulation, leading to receptor desensitization and rapid internalization. Phosphorylated to a greater extent on serine than threonine residues. Threonine phosphorylation is required for arrestin binding and receptor endocytosis but is not necessary for desensitization. In terms of tissue distribution, cerebrum and kidney.

It localises to the cell membrane. Its subcellular location is the cytoplasm. Receptor for somatostatin-14 and -28. This receptor is coupled via pertussis toxin sensitive G proteins to inhibition of adenylyl cyclase. In addition it stimulates phosphotyrosine phosphatase and PLC via pertussis toxin insensitive as well as sensitive G proteins. Inhibits calcium entry by suppressing voltage-dependent calcium channels. Acts as the functionally dominant somatostatin receptor in pancreatic alpha- and beta-cells where it mediates the inhibitory effect of somatostatin-14 on hormone secretion. Inhibits cell growth through enhancement of MAPK1 and MAPK2 phosphorylation and subsequent up-regulation of CDKN1B. Stimulates neuronal migration and axon outgrowth and may participate in neuron development and maturation during brain development. Mediates negative regulation of insulin receptor signaling through PTPN6. Inactivates SSTR3 receptor function following heterodimerization. This chain is Somatostatin receptor type 2 (Sstr2), found in Mus musculus (Mouse).